A 599-amino-acid chain; its full sequence is Adenine deaminase (599 aa).

Belongs to the metallo-dependent hydrolases superfamily. Adenine deaminase family. The cofactor is Mn(2+).

It catalyses the reaction adenine + H2O + H(+) = hypoxanthine + NH4(+). The protein is Adenine deaminase of Clostridium botulinum (strain ATCC 19397 / Type A).